A 126-amino-acid polypeptide reads, in one-letter code: Histone H2B type 1-K (126 aa).

The span at 1–12 (MPEPAKSAPAPK) shows a compositional bias: low complexity. The tract at residues 1-36 (MPEPAKSAPAPKKGSKKAVTKAQKKDGKKRKRSRKE) is disordered. At Pro2 the chain carries N-acetylproline. ADP-ribosyl glutamic acid is present on Glu3. Lys6 bears the N6-(2-hydroxyisobutyryl)lysine; alternate mark. Lys6 carries the post-translational modification N6-(beta-hydroxybutyryl)lysine; alternate. At Lys6 the chain carries N6-acetyllysine; alternate. Lys6 carries the N6-butyryllysine; alternate modification. Lys6 carries the N6-crotonyllysine; alternate modification. Lys6 carries the post-translational modification N6-lactoyllysine; alternate. Residue Lys6 forms a Glycyl lysine isopeptide (Lys-Gly) (interchain with G-Cter in SUMO2); alternate linkage. The residue at position 7 (Ser7) is an ADP-ribosylserine. Lys12 is subject to N6-(beta-hydroxybutyryl)lysine; alternate. 2 positions are modified to N6-acetyllysine; alternate: Lys12 and Lys13. 2 positions are modified to N6-crotonyllysine; alternate: Lys12 and Lys13. An N6-lactoyllysine; alternate modification is found at Lys12. Lys13 carries the N6-(2-hydroxyisobutyryl)lysine; alternate modification. Ser15 carries the post-translational modification Phosphoserine; by STK4/MST1. Lys16, Lys17, Lys21, and Lys24 each carry N6-acetyllysine; alternate. An N6-crotonyllysine; alternate mark is found at Lys16, Lys17, Lys21, and Lys24. N6-lactoyllysine; alternate occurs at positions 16, 17, 21, and 24. Residue Lys17 is modified to N6-glutaryllysine; alternate. N6-(2-hydroxyisobutyryl)lysine; alternate occurs at positions 21 and 24. Lys21 is subject to N6-(beta-hydroxybutyryl)lysine; alternate. At Lys21 the chain carries N6-butyryllysine; alternate. A Glycyl lysine isopeptide (Lys-Gly) (interchain with G-Cter in SUMO2); alternate cross-link involves residue Lys21. Lys25 is modified (N6-(2-hydroxyisobutyryl)lysine). Lys35 bears the N6-(2-hydroxyisobutyryl)lysine; alternate mark. Lys35 is subject to N6-(beta-hydroxybutyryl)lysine; alternate. Position 35 is an N6-crotonyllysine; alternate (Lys35). Lys35 bears the N6-glutaryllysine; alternate mark. Position 35 is an N6-succinyllysine; alternate (Lys35). Residue Lys35 forms a Glycyl lysine isopeptide (Lys-Gly) (interchain with G-Cter in ubiquitin); alternate linkage. PolyADP-ribosyl glutamic acid is present on Glu36. Ser37 is subject to Phosphoserine; by AMPK. 3 positions are modified to N6-(2-hydroxyisobutyryl)lysine; alternate: Lys44, Lys47, and Lys58. Lys44 is modified (N6-lactoyllysine; alternate). N6-glutaryllysine; alternate is present on residues Lys44 and Lys47. Residue Lys47 is modified to N6-methyllysine; alternate. Residue Lys58 is modified to N6,N6-dimethyllysine; alternate. Arg80 carries the dimethylated arginine modification. Position 86 is an N6-(2-hydroxyisobutyryl)lysine; alternate (Lys86). Lys86 bears the N6-acetyllysine; alternate mark. Lys86 is subject to N6-lactoyllysine; alternate. Position 86 is an N6,N6,N6-trimethyllysine; alternate (Lys86). Omega-N-methylarginine occurs at positions 87 and 93. Lys109 carries the post-translational modification N6-(2-hydroxyisobutyryl)lysine; alternate. Lys109 carries the N6-lactoyllysine; alternate modification. Lys109 bears the N6-glutaryllysine; alternate mark. Position 109 is an N6-methyllysine; alternate (Lys109). O-linked (GlcNAc) serine glycosylation occurs at Ser113. Thr116 carries the phosphothreonine modification. N6-(2-hydroxyisobutyryl)lysine; alternate occurs at positions 117 and 121. Lys117 carries the post-translational modification N6-(beta-hydroxybutyryl)lysine; alternate. Lys117 and Lys121 each carry N6-lactoyllysine; alternate. N6-glutaryllysine; alternate occurs at positions 117 and 121. Lys117 and Lys121 each carry N6-succinyllysine; alternate. Residue Lys117 is modified to N6-methylated lysine; alternate. Lys121 participates in a covalent cross-link: Glycyl lysine isopeptide (Lys-Gly) (interchain with G-Cter in ubiquitin); alternate.

It belongs to the histone H2B family. As to quaternary structure, the nucleosome is a histone octamer containing two molecules each of H2A, H2B, H3 and H4 assembled in one H3-H4 heterotetramer and two H2A-H2B heterodimers. The octamer wraps approximately 147 bp of DNA. Monoubiquitination at Lys-35 (H2BK34Ub) by the MSL1/MSL2 dimer is required for histone H3 'Lys-4' (H3K4me) and 'Lys-79' (H3K79me) methylation and transcription activation at specific gene loci, such as HOXA9 and MEIS1 loci. Similarly, monoubiquitination at Lys-121 (H2BK120Ub) by the RNF20/40 complex gives a specific tag for epigenetic transcriptional activation and is also prerequisite for histone H3 'Lys-4' and 'Lys-79' methylation. It also functions cooperatively with the FACT dimer to stimulate elongation by RNA polymerase II. H2BK120Ub also acts as a regulator of mRNA splicing: deubiquitination by USP49 is required for efficient cotranscriptional splicing of a large set of exons. Post-translationally, phosphorylated on Ser-15 (H2BS14ph) by STK4/MST1 during apoptosis; which facilitates apoptotic chromatin condensation. Also phosphorylated on Ser-15 in response to DNA double strand breaks (DSBs), and in correlation with somatic hypermutation and immunoglobulin class-switch recombination. Phosphorylation at Ser-37 (H2BS36ph) by AMPK in response to stress promotes transcription. In terms of processing, glcNAcylation at Ser-113 promotes monoubiquitination of Lys-121. It fluctuates in response to extracellular glucose, and associates with transcribed genes. ADP-ribosylated by PARP1 or PARP2 on Ser-7 (H2BS6ADPr) in response to DNA damage. H2BS6ADPr promotes recruitment of CHD1L. Mono-ADP-ribosylated on Glu-3 (H2BE2ADPr) by PARP3 in response to single-strand breaks. Poly ADP-ribosylation on Glu-36 (H2BE35ADPr) by PARP1 regulates adipogenesis: it inhibits phosphorylation at Ser-37 (H2BS36ph), thereby blocking expression of pro-adipogenetic genes. Post-translationally, crotonylation (Kcr) is specifically present in male germ cells and marks testis-specific genes in post-meiotic cells, including X-linked genes that escape sex chromosome inactivation in haploid cells. Crotonylation marks active promoters and enhancers and confers resistance to transcriptional repressors. It is also associated with post-meiotically activated genes on autosomes. In terms of processing, lactylated in macrophages by EP300/P300 by using lactoyl-CoA directly derived from endogenous or exogenous lactate, leading to stimulates gene transcription.

The protein resides in the nucleus. Its subcellular location is the chromosome. In terms of biological role, core component of nucleosome. Nucleosomes wrap and compact DNA into chromatin, limiting DNA accessibility to the cellular machineries which require DNA as a template. Histones thereby play a central role in transcription regulation, DNA repair, DNA replication and chromosomal stability. DNA accessibility is regulated via a complex set of post-translational modifications of histones, also called histone code, and nucleosome remodeling. The protein is Histone H2B type 1-K of Macaca fascicularis (Crab-eating macaque).